Consider the following 263-residue polypeptide: tRNA (guanine-N(7)-)-methyltransferase (263 aa).

The interval 1 to 33 is disordered; that stretch reads MSDHGRMHSTGSEVAAPVAPDPDTEGVHPHFNR. Glu-89, Glu-114, Asp-146, and Asp-169 together coordinate S-adenosyl-L-methionine. Asp-169 is a catalytic residue. Substrate is bound by residues Lys-173, Asp-205, and 242 to 245; that span reads TKYE.

Belongs to the class I-like SAM-binding methyltransferase superfamily. TrmB family.

It catalyses the reaction guanosine(46) in tRNA + S-adenosyl-L-methionine = N(7)-methylguanosine(46) in tRNA + S-adenosyl-L-homocysteine. It functions in the pathway tRNA modification; N(7)-methylguanine-tRNA biosynthesis. In terms of biological role, catalyzes the formation of N(7)-methylguanine at position 46 (m7G46) in tRNA. This is tRNA (guanine-N(7)-)-methyltransferase from Mycolicibacterium gilvum (strain PYR-GCK) (Mycobacterium gilvum (strain PYR-GCK)).